We begin with the raw amino-acid sequence, 626 residues long: Protein MICRORCHIDIA 2 (626 aa).

Residues 579-626 adopt a coiled-coil conformation; sequence MRCEEYIKKENETEQTVKSLEKELEEFKSKCAHLALLVDAKKKEMQQA.

This sequence belongs to the MORC ATPase protein family. Homodimer and heterodimer with MORC6. Component of an RNA-directed DNA methylation (RdDM) complex that contains at least MORC6, MORC1/CRT1, MORC2, SWI3D and SUVH9. Binds directly to SUVH9. Mg(2+) is required as a cofactor. Requires Mn(2+) as cofactor.

It is found in the nucleus. The protein resides in the endosome. In terms of biological role, mediator of defense signaling triggered by distinct classes of R proteins. Required during hypersensitive response (HR) that confers disease resistance to turnip crinkle virus (TCV). Contributes to resistance against Pseudomonas syringae and Hyaloperonospora arabidopsidis, at early stages prior to cytosolic calcium ions Ca(2+) accumulation. Required for pathogen-associated molecular pattern (PAMP)-triggered immunity, basal resistance, non-host resistance and systemic acquired resistance (SAR). Involved in RNA-directed DNA methylation (RdDM) as a component of the RdDM machinery and required for gene silencing. May also be involved in the regulation of chromatin architecture to maintain gene silencing. Exhibits ATPase activity. The chain is Protein MICRORCHIDIA 2 from Arabidopsis thaliana (Mouse-ear cress).